The following is a 114-amino-acid chain: Large ribosomal subunit protein bL19 (114 aa).

This sequence belongs to the bacterial ribosomal protein bL19 family.

Functionally, this protein is located at the 30S-50S ribosomal subunit interface and may play a role in the structure and function of the aminoacyl-tRNA binding site. In Listeria welshimeri serovar 6b (strain ATCC 35897 / DSM 20650 / CCUG 15529 / CIP 8149 / NCTC 11857 / SLCC 5334 / V8), this protein is Large ribosomal subunit protein bL19.